A 191-amino-acid polypeptide reads, in one-letter code: Ribosomal RNA small subunit methyltransferase G (191 aa).

Residues Gly-62, Phe-67, 111-112, and Arg-124 contribute to the S-adenosyl-L-methionine site; that span reads IE.

The protein belongs to the methyltransferase superfamily. RNA methyltransferase RsmG family.

It is found in the cytoplasm. The catalysed reaction is guanosine(527) in 16S rRNA + S-adenosyl-L-methionine = N(7)-methylguanosine(527) in 16S rRNA + S-adenosyl-L-homocysteine. Functionally, specifically methylates the N7 position of guanine in position 527 of 16S rRNA. This chain is Ribosomal RNA small subunit methyltransferase G, found in Rickettsia akari (strain Hartford).